A 1241-amino-acid polypeptide reads, in one-letter code: ATP-dependent helicase/nuclease subunit A (1241 aa).

The 474-residue stretch at 12-485 folds into the UvrD-like helicase ATP-binding domain; that stretch reads SQWTDDQWKA…IDLAKNFRSR (474 aa). ATP is bound at residue 33 to 40; the sequence is AAAGSGKT. Positions 505 to 805 constitute a UvrD-like helicase C-terminal domain; sequence GEIDYDADAE…RIMTIHKSKG (301 aa).

It belongs to the helicase family. AddA subfamily. As to quaternary structure, heterodimer of AddA and AddB/RexB. Requires Mg(2+) as cofactor.

The enzyme catalyses Couples ATP hydrolysis with the unwinding of duplex DNA by translocating in the 3'-5' direction.. It catalyses the reaction ATP + H2O = ADP + phosphate + H(+). The heterodimer acts as both an ATP-dependent DNA helicase and an ATP-dependent, dual-direction single-stranded exonuclease. Recognizes the chi site generating a DNA molecule suitable for the initiation of homologous recombination. The AddA nuclease domain is required for chi fragment generation; this subunit has the helicase and 3' -&gt; 5' nuclease activities. The chain is ATP-dependent helicase/nuclease subunit A from Bacillus cereus (strain ATCC 10987 / NRS 248).